The chain runs to 161 residues: Phosphopantetheine adenylyltransferase (161 aa).

Ser9 lines the substrate pocket. ATP-binding positions include 9 to 10 (SF) and His17. Residues Lys41, Thr73, and Arg87 each contribute to the substrate site. ATP-binding positions include 88–90 (GLR), Glu98, and 123–129 (FAHISST).

This sequence belongs to the bacterial CoaD family. Homohexamer. Mg(2+) is required as a cofactor.

The protein localises to the cytoplasm. It carries out the reaction (R)-4'-phosphopantetheine + ATP + H(+) = 3'-dephospho-CoA + diphosphate. It functions in the pathway cofactor biosynthesis; coenzyme A biosynthesis; CoA from (R)-pantothenate: step 4/5. Reversibly transfers an adenylyl group from ATP to 4'-phosphopantetheine, yielding dephospho-CoA (dPCoA) and pyrophosphate. The polypeptide is Phosphopantetheine adenylyltransferase (Chloroflexus aurantiacus (strain ATCC 29366 / DSM 635 / J-10-fl)).